The chain runs to 300 residues: Alpha-tubulin N-acetyltransferase 1 (300 aa).

An N-acetyltransferase domain is found at 1–190; it reads MEFPFDVDAL…NNFVIFEGFF (190 aa). The residue at position 56 (K56) is an N6-acetyllysine; by autocatalysis. Position 124-137 (124-137) interacts with acetyl-CoA; that stretch reads FYIHESLQRHGHGR. K146 bears the N6-acetyllysine; by autocatalysis mark. Residue 160 to 169 coordinates acetyl-CoA; that stretch reads SQKLLKFLNK. N6-acetyllysine; by autocatalysis occurs at positions 210 and 221. 2 disordered regions span residues 229-263 and 280-300; these read PLNR…RPFV and TARL…RRTR. Phosphoserine is present on residues S249 and S253. At R282 the chain carries Asymmetric dimethylarginine. S292 bears the Phosphoserine mark. Residue R300 is modified to Omega-N-methylarginine.

It belongs to the acetyltransferase ATAT1 family. In terms of assembly, component of the BBSome complex. Interacts with AP2 alpha-adaptins, including AP2A2, but not with AP1 gamma-adaptin (AP1G1/AP1G2); this interaction is required for efficient alpha-tubulin acetylation, hence clathrin-coated pits are sites of microtubule acetylation. Post-translationally, autoacetylation strongly increases tubulin acetylation.

The protein resides in the cytoplasm. It is found in the membrane. The protein localises to the clathrin-coated pit. It localises to the cell junction. Its subcellular location is the focal adhesion. The protein resides in the cell projection. It is found in the axon. The protein localises to the cytoskeleton. It localises to the spindle. The enzyme catalyses L-lysyl-[alpha-tubulin] + acetyl-CoA = N(6)-acetyl-L-lysyl-[alpha-tubulin] + CoA + H(+). Its function is as follows. Specifically acetylates 'Lys-40' in alpha-tubulin on the lumenal side of microtubules. Promotes microtubule destabilization and accelerates microtubule dynamics; this activity may be independent of acetylation activity. Acetylates alpha-tubulin with a slow enzymatic rate, due to a catalytic site that is not optimized for acetyl transfer. Enters the microtubule through each end and diffuses quickly throughout the lumen of microtubules. Acetylates only long/old microtubules because of its slow acetylation rate since it does not have time to act on dynamically unstable microtubules before the enzyme is released. Required for normal sperm flagellar function. Promotes directional cell locomotion and chemotaxis, through AP2A2-dependent acetylation of alpha-tubulin at clathrin-coated pits that are concentrated at the leading edge of migrating cells. May facilitate primary cilium assembly. This chain is Alpha-tubulin N-acetyltransferase 1, found in Sus scrofa (Pig).